A 199-amino-acid chain; its full sequence is MRIRLLFAPVSCLLLVCCADSSALRWIQQPSATRNTPTIAFFQVTFDRYNTHLLETRLHAQTLEFYHHDQTWTARDIHFTRYDGNGRASVRGHAGVLLTDCEGTVFYLGKKVDCFFPHEGLRLEGRAFRWENTRALFTSDHFSPVRISDASGAVVTGVGLCVNARTKRFVFQNGVHIDVDLDSFAKTRASRYAAPNLSP.

This is an uncharacterized protein from Treponema pallidum (strain Nichols).